Reading from the N-terminus, the 93-residue chain is DNA-directed RNA polymerase subunit omega (93 aa).

It belongs to the RNA polymerase subunit omega family. In terms of assembly, the RNAP catalytic core consists of 2 alpha, 1 beta, 1 beta' and 1 omega subunit. When a sigma factor is associated with the core the holoenzyme is formed, which can initiate transcription.

The catalysed reaction is RNA(n) + a ribonucleoside 5'-triphosphate = RNA(n+1) + diphosphate. Its function is as follows. Promotes RNA polymerase assembly. Latches the N- and C-terminal regions of the beta' subunit thereby facilitating its interaction with the beta and alpha subunits. This Glaesserella parasuis serovar 5 (strain SH0165) (Haemophilus parasuis) protein is DNA-directed RNA polymerase subunit omega.